Reading from the N-terminus, the 135-residue chain is Large ribosomal subunit protein uL16c (135 aa).

It belongs to the universal ribosomal protein uL16 family. In terms of assembly, part of the 50S ribosomal subunit.

It is found in the plastid. Its subcellular location is the chloroplast. This chain is Large ribosomal subunit protein uL16c, found in Morus indica (Mulberry).